The sequence spans 575 residues: Transcription factor COE2 (575 aa).

The segment at 62–65 (RKSN) is interaction with DNA. The C5-type zinc-finger motif lies at 150-169 (CRVLLTHEVMCSRCCEKKSC). Interaction with DNA regions lie at residues 196–203 (NCLKTAGN) and 235–238 (NNSK). The IPT/TIG domain occupies 253-336 (PCIKAISPSE…KGAPGRFIYT (84 aa)). Polar residues predominate over residues 441–453 (STQGNNQGYIRNT). The tract at residues 441–479 (STQGNNQGYIRNTSSISPRGYSSSSTPQQSNYSTSSNSM) is disordered. The segment covering 454-479 (SSISPRGYSSSSTPQQSNYSTSSNSM) has biased composition (low complexity).

Belongs to the COE family. In terms of assembly, forms either a homodimer or a heterodimer with a related family member. Interacts with SIX1. As to expression, in adult expressed in olfactory epithelium and at a much lower level in Purkinje cells of the cerebellum. In embryo expressed in epithalamus, in cells near the ventricular zone of mesencephalon and on the ventral surface of rhombencephalon, in the developing vomeronasal organ, at a lower level in developing spinal cord. Not expressed in developing retina, inner ear, dorsal root ganglia, trigeminal ganglia and glossopharyngeal ganglia.

It is found in the nucleus. Transcription factor that, in osteoblasts, activates the decoy receptor for RANKL, TNFRSF11B, which in turn regulates osteoclast differentiation. Acts in synergy with the Wnt-responsive LEF1/CTNNB1 pathway. Recognizes variations of the palindromic sequence 5'-ATTCCCNNGGGAATT-3'. This is Transcription factor COE2 (Ebf2) from Mus musculus (Mouse).